Here is a 127-residue protein sequence, read N- to C-terminus: Modulator protein MzrA (127 aa).

Residues 1–10 are Cytoplasmic-facing; the sequence is MGLQNMTLRR. A helical transmembrane segment spans residues 11–31; that stretch reads FTLSMSALLLLCALLWLWAAL. Residues 32-127 are Periplasmic-facing; sequence EQQESSLAIR…RLRDAPHRLG (96 aa).

This sequence belongs to the MzrA family. In terms of assembly, interacts with EnvZ.

Its subcellular location is the cell inner membrane. In terms of biological role, modulates the activity of the EnvZ/OmpR two-component regulatory system, probably by directly modulating EnvZ enzymatic activity and increasing stability of phosphorylated OmpR. This is Modulator protein MzrA from Enterobacter lignolyticus (strain SCF1).